Consider the following 206-residue polypeptide: 21.9 kDa heat shock protein (206 aa).

The signal sequence occupies residues 1–29 (MAAVAEREVLGMVAAVAAMVVMMAPPAAA). The sHSP domain maps to 65-187 (EPAAVALARC…GREPRVVAID (123 aa)). Residues 94 to 96 (RGD) carry the Cell attachment site motif.

Belongs to the small heat shock protein (HSP20) family. In terms of assembly, may form oligomeric structures.

It is found in the endoplasmic reticulum. In Oryza sativa subsp. japonica (Rice), this protein is 21.9 kDa heat shock protein (HSP21.9).